The sequence spans 185 residues: Casparian strip membrane protein 2 (185 aa).

Over 1-25 the chain is Cytoplasmic; it reads MKAVSIEAGEGSKAKRVHGVNRGIS. The helical transmembrane segment at 26–46 threads the bilayer; it reads VFDLVLRIVALVGTLASAVAM. Over 47 to 73 the chain is Extracellular; it reads GTADQALSFSTQIVNFEAQYDDIDAFK. A helical transmembrane segment spans residues 74–94; it reads FFVVSNSITCVYLALSIPISI. Over 95–106 the chain is Cytoplasmic; it reads FHIIRSRAGKSR. A helical membrane pass occupies residues 107–127; the sequence is VLLIVLDAIMLVFLTSGASAA. Topologically, residues 128 to 160 are extracellular; the sequence is AAIVYLAHNGNTSTNWFSICQQYTDFCQRSAGS. N-linked (GlcNAc...) asparagine glycosylation is present at asparagine 138. The helical transmembrane segment at 161 to 181 threads the bilayer; the sequence is LIGSFGAMALMVLLIILSSIA. Over 182–185 the chain is Cytoplasmic; it reads LSRR.

It belongs to the Casparian strip membrane proteins (CASP) family. As to quaternary structure, homodimer and heterodimers.

The protein localises to the cell membrane. In terms of biological role, regulates membrane-cell wall junctions and localized cell wall deposition. Required for establishment of the Casparian strip membrane domain (CSD) and the subsequent formation of Casparian strips, a cell wall modification of the root endodermis that determines an apoplastic barrier between the intraorganismal apoplasm and the extraorganismal apoplasm and prevents lateral diffusion. This Solanum demissum (Wild potato) protein is Casparian strip membrane protein 2.